Reading from the N-terminus, the 311-residue chain is Iron-binding protein YfeA (311 aa).

An N-terminal signal peptide occupies residues 1-31 (MIERLNSPFLRAAALFTIVAFSSLISTAALA). Histidine 76, histidine 141, glutamate 207, and aspartate 282 together coordinate Fe(2+).

Belongs to the bacterial solute-binding protein 9 family. In terms of assembly, monomer.

It localises to the periplasm. In terms of biological role, part of the ATP-binding cassette (ABC) transport system YfeABC involved in iron import. Binds iron with high affinity and specificity and delivers it to the membrane permease for translocation into the cytoplasm. Also binds Mn(2+) and Zn(2+). In Yersinia pestis, this protein is Iron-binding protein YfeA (yfeA).